The primary structure comprises 55 residues: ATP synthase F(0) complex subunit 8 (55 aa).

Residues 9 to 29 (WFAIMVFSWFVFLIFLPPKIM) form a helical membrane-spanning segment.

This sequence belongs to the ATPase protein 8 family. Component of the ATP synthase complex composed at least of ATP5F1A/subunit alpha, ATP5F1B/subunit beta, ATP5MC1/subunit c (homooctomer), MT-ATP6/subunit a, MT-ATP8/subunit 8, ATP5ME/subunit e, ATP5MF/subunit f, ATP5MG/subunit g, ATP5MK/subunit k, ATP5MJ/subunit j, ATP5F1C/subunit gamma, ATP5F1D/subunit delta, ATP5F1E/subunit epsilon, ATP5PF/subunit F6, ATP5PB/subunit b, ATP5PD/subunit d, ATP5PO/subunit OSCP. ATP synthase complex consists of a soluble F(1) head domain (subunits alpha(3) and beta(3)) - the catalytic core - and a membrane F(0) domain - the membrane proton channel (subunits c, a, 8, e, f, g, k and j). These two domains are linked by a central stalk (subunits gamma, delta, and epsilon) rotating inside the F1 region and a stationary peripheral stalk (subunits F6, b, d, and OSCP).

It localises to the mitochondrion membrane. Subunit 8, of the mitochondrial membrane ATP synthase complex (F(1)F(0) ATP synthase or Complex V) that produces ATP from ADP in the presence of a proton gradient across the membrane which is generated by electron transport complexes of the respiratory chain. ATP synthase complex consist of a soluble F(1) head domain - the catalytic core - and a membrane F(1) domain - the membrane proton channel. These two domains are linked by a central stalk rotating inside the F(1) region and a stationary peripheral stalk. During catalysis, ATP synthesis in the catalytic domain of F(1) is coupled via a rotary mechanism of the central stalk subunits to proton translocation. In vivo, can only synthesize ATP although its ATP hydrolase activity can be activated artificially in vitro. Part of the complex F(0) domain. The protein is ATP synthase F(0) complex subunit 8 of Tetraodon nigroviridis (Spotted green pufferfish).